Here is a 200-residue protein sequence, read N- to C-terminus: NADH-quinone oxidoreductase subunit C (200 aa).

The protein belongs to the complex I 30 kDa subunit family. As to quaternary structure, NDH-1 is composed of 14 different subunits. Subunits NuoB, C, D, E, F, and G constitute the peripheral sector of the complex.

Its subcellular location is the cell inner membrane. The enzyme catalyses a quinone + NADH + 5 H(+)(in) = a quinol + NAD(+) + 4 H(+)(out). Functionally, NDH-1 shuttles electrons from NADH, via FMN and iron-sulfur (Fe-S) centers, to quinones in the respiratory chain. The immediate electron acceptor for the enzyme in this species is believed to be ubiquinone. Couples the redox reaction to proton translocation (for every two electrons transferred, four hydrogen ions are translocated across the cytoplasmic membrane), and thus conserves the redox energy in a proton gradient. In Cereibacter sphaeroides (strain ATCC 17029 / ATH 2.4.9) (Rhodobacter sphaeroides), this protein is NADH-quinone oxidoreductase subunit C.